Consider the following 161-residue polypeptide: Large ribosomal subunit protein uL23m (161 aa).

The transit peptide at 1–34 directs the protein to the mitochondrion; the sequence is MSKIAGKRLVYFPNITFTLCRGLNLQPKFAVFRV.

The protein belongs to the universal ribosomal protein uL23 family. Component of the mitochondrial large ribosomal subunit (mt-LSU). Mature yeast 74S mitochondrial ribosomes consist of a small (37S) and a large (54S) subunit. The 37S small subunit contains a 15S ribosomal RNA (15S mt-rRNA) and at least 32 different proteins. The 54S large subunit contains a 21S rRNA (21S mt-rRNA) and at least 45 different proteins. uL23m forms the wall of the exit tunnel. Interacts with the C-terminus of OXA1.

It is found in the mitochondrion. Functionally, component of the mitochondrial ribosome (mitoribosome), a dedicated translation machinery responsible for the synthesis of mitochondrial genome-encoded proteins, including at least some of the essential transmembrane subunits of the mitochondrial respiratory chain. The mitoribosomes are attached to the mitochondrial inner membrane and translation products are cotranslationally integrated into the membrane. The polypeptide is Large ribosomal subunit protein uL23m (mrp20) (Schizosaccharomyces pombe (strain 972 / ATCC 24843) (Fission yeast)).